The following is a 498-amino-acid chain: ATP synthase subunit beta, chloroplastic (498 aa).

172-179 (GGAGVGKT) is a binding site for ATP.

Belongs to the ATPase alpha/beta chains family. F-type ATPases have 2 components, CF(1) - the catalytic core - and CF(0) - the membrane proton channel. CF(1) has five subunits: alpha(3), beta(3), gamma(1), delta(1), epsilon(1). CF(0) has four main subunits: a(1), b(1), b'(1) and c(9-12).

It localises to the plastid. It is found in the chloroplast thylakoid membrane. It carries out the reaction ATP + H2O + 4 H(+)(in) = ADP + phosphate + 5 H(+)(out). Functionally, produces ATP from ADP in the presence of a proton gradient across the membrane. The catalytic sites are hosted primarily by the beta subunits. This chain is ATP synthase subunit beta, chloroplastic, found in Calamus usitatus (Palm tree).